A 304-amino-acid polypeptide reads, in one-letter code: UDP-3-O-acyl-N-acetylglucosamine deacetylase (304 aa).

Zn(2+)-binding residues include H78, H237, and D241. H264 functions as the Proton donor in the catalytic mechanism.

It belongs to the LpxC family. It depends on Zn(2+) as a cofactor.

The enzyme catalyses a UDP-3-O-[(3R)-3-hydroxyacyl]-N-acetyl-alpha-D-glucosamine + H2O = a UDP-3-O-[(3R)-3-hydroxyacyl]-alpha-D-glucosamine + acetate. The protein operates within glycolipid biosynthesis; lipid IV(A) biosynthesis; lipid IV(A) from (3R)-3-hydroxytetradecanoyl-[acyl-carrier-protein] and UDP-N-acetyl-alpha-D-glucosamine: step 2/6. Catalyzes the hydrolysis of UDP-3-O-myristoyl-N-acetylglucosamine to form UDP-3-O-myristoylglucosamine and acetate, the committed step in lipid A biosynthesis. This chain is UDP-3-O-acyl-N-acetylglucosamine deacetylase, found in Polynucleobacter necessarius subsp. necessarius (strain STIR1).